We begin with the raw amino-acid sequence, 1197 residues long: SRC kinase signaling inhibitor 1 (1197 aa).

A compositionally biased stretch (basic and acidic residues) spans 19–45; it reads AEGRARSPREEVGPRDPGGRGEPDPER. A disordered region spans residues 19-80; the sequence is AEGRARSPRE…GGSGGRRFSN (62 aa). Serine 47 and serine 52 each carry phosphoserine. The span at 65–75 shows a compositional bias: gly residues; it reads LGGGGSGGSGG. A Phosphoserine modification is found at serine 79. At threonine 86 the chain carries Phosphothreonine. Phosphoserine occurs at positions 87, 98, 178, 200, 204, 214, and 260. Tyrosine 276 is modified (phosphotyrosine). The tract at residues 319 to 415 is disordered; that stretch reads ASRESSPTRR…RRDVKPDEDL (97 aa). Residues 321–331 are compositionally biased toward polar residues; that stretch reads RESSPTRRLNN. Residues 332–341 show a composition bias toward low complexity; the sequence is LSPASHLASS. Serine 333, serine 342, and serine 359 each carry phosphoserine. The span at 348 to 366 shows a compositional bias: low complexity; that stretch reads PSGLPSGLPSGSPSRSRLS. Omega-N-methylarginine is present on residues arginine 364 and arginine 371. Phosphoserine occurs at positions 378, 397, and 399. The span at 391 to 400 shows a compositional bias: polar residues; the sequence is PTSQGVSPSP. Residues 404-415 show a composition bias toward basic and acidic residues; that stretch reads LERRDVKPDEDL. The residue at position 431 (tyrosine 431) is a Phosphotyrosine. The disordered stretch occupies residues 501 to 676; the sequence is GFRLPPSSPQ…AVSSTPAGQP (176 aa). A compositionally biased stretch (pro residues) spans 520-531; sequence GGPPPPHSPYSG. Residues serine 527, serine 530, and serine 534 each carry the phosphoserine modification. Position 535 is an omega-N-methylarginine (arginine 535). 5 positions are modified to phosphoserine: serine 537, serine 547, serine 549, serine 551, and serine 556. The span at 595–607 shows a compositional bias: basic and acidic residues; that stretch reads KDTETRERMEAME. Residues serine 631 and serine 655 each carry the phosphoserine modification. Residues threonine 658 and threonine 671 each carry the phosphothreonine modification. An interaction with SNAP25 region spans residues 681–731; the sequence is RLQMQMHLRGLQNSASDLRGQLQQLRKLQLQNQESVRALLKRTEAELSMRV. 2 coiled-coil regions span residues 688–708 and 760–780; these read LRGL…LRKL and EELI…IQRD. Serine 878 and serine 900 each carry phosphoserine. Disordered regions lie at residues 891–949 and 983–1065; these read GLDF…ERDW and DCAS…VVTS. Threonine 918 carries the post-translational modification Phosphothreonine. The residue at position 1021 (serine 1021) is a Phosphoserine. A compositionally biased stretch (pro residues) spans 1036–1045; that stretch reads KSPPPPPPRR. Phosphoserine is present on residues serine 1077 and serine 1094. The disordered stretch occupies residues 1141 to 1163; that stretch reads SRLKAAQGPAGSPDKGKHGKQRT.

It belongs to the SRCIN1 family. In terms of assembly, interacts with BCAR1/p130Cas through its C-terminal domain and with CSK, CTTN and SRC. Also interacts with MAPRE3/EB3, SORBS3/vinexin and the N-terminal coiled-coil region of SNAP25. Tyrosine-phosphorylated in response to EGF and to cell adhesion to integrin ligands. As to expression, expressed exclusively in brain. Abundant in telencephalon and expressed moderately in cerebellum, hypothalamus, thalamus, superior and inferior colliculi, and olfactory bulb. No expression detected in medulla oblongata, spinal cord or pituitary gland. Enriched in the neuropil rather than soma in the thalamus, corpus striatum and cerebral cortex. Detected in astrocytes.

Its subcellular location is the cytoplasm. The protein resides in the cytoskeleton. The protein localises to the cell projection. It localises to the axon. It is found in the dendrite. Its subcellular location is the presynapse. The protein resides in the postsynapse. The protein localises to the postsynaptic density. Acts as a negative regulator of SRC by activating CSK which inhibits SRC activity and downstream signaling, leading to impaired cell spreading and migration. Regulates dendritic spine morphology. Involved in calcium-dependent exocytosis. May play a role in neurotransmitter release or synapse maintenance. This Rattus norvegicus (Rat) protein is SRC kinase signaling inhibitor 1.